Consider the following 202-residue polypeptide: Protein cuti-1 (202 aa).

At 1–37 (MPNDRVAPLPPNFVYSPHDKFYYAPATCNSMHYTTAS) the chain is on the cytoplasmic side. Residues 38–58 (YISAFIEFLVMGTGAICFYVM) traverse the membrane as a helical segment. Residues 59 to 68 (SHKSDSIGKW) are Extracellular-facing. A helical transmembrane segment spans residues 69–89 (LFYIQAGITVLSLLTSALMAF). Residues 90–107 (GLWKENPQMLGSKLKFIE) lie on the Cytoplasmic side of the membrane. Residues 108–128 (FIICFLLIWAVISIVCMAFGI) form a helical membrane-spanning segment. Residues 129 to 148 (QFTRQVFGIFGKVHRIEQDY) lie on the Extracellular side of the membrane. A helical membrane pass occupies residues 149–169 (GPIWPFNIAVVSFFTAAIAIW). The Cytoplasmic segment spans residues 170–202 (TRIIIQGAADYLYDKAYFADKQNVELRESSKTR).

Interacts with vps-39.

It is found in the cell membrane. The protein resides in the cytoplasm. In terms of biological role, involved in cuticle formation and ensures cuticle shedding during larval development. Plays a role in maintaining the hypodermis. In association with vps-39, may play a role in vesicle tethering. The chain is Protein cuti-1 from Caenorhabditis elegans.